We begin with the raw amino-acid sequence, 144 residues long: Ribonuclease H (144 aa).

In terms of domain architecture, RNase H type-1 spans 1 to 141; that stretch reads MDKIDIYSDG…ADALANRGVE (141 aa). Residues Asp9, Glu47, Asp69, and Asp133 each contribute to the Mg(2+) site.

This sequence belongs to the RNase H family. In terms of assembly, monomer. Mg(2+) serves as cofactor.

The protein resides in the cytoplasm. It catalyses the reaction Endonucleolytic cleavage to 5'-phosphomonoester.. In terms of biological role, endonuclease that specifically degrades the RNA of RNA-DNA hybrids. This Janthinobacterium sp. (strain Marseille) (Minibacterium massiliensis) protein is Ribonuclease H.